The primary structure comprises 621 residues: Anthranilate synthase alpha subunit 2, chloroplastic (621 aa).

Residues 1–87 constitute a chloroplast transit peptide; that stretch reads MSAVSISAVK…SEEQFTKFKK (87 aa).

This sequence belongs to the anthranilate synthase component I family. Heterotetramer consisting of two non-identical subunits: a beta subunit and a large alpha subunit.

It is found in the plastid. The protein localises to the chloroplast. The catalysed reaction is chorismate + L-glutamine = anthranilate + pyruvate + L-glutamate + H(+). It participates in amino-acid biosynthesis; L-tryptophan biosynthesis; L-tryptophan from chorismate: step 1/5. Feedback inhibition by tryptophan. Functionally, part of a heterotetrameric complex that catalyzes the two-step biosynthesis of anthranilate, an intermediate in the biosynthesis of L-tryptophan. In the first step, the glutamine-binding beta subunit of anthranilate synthase (AS) provides the glutamine amidotransferase activity which generates ammonia as a substrate that, along with chorismate, is used in the second step, catalyzed by the large alpha subunit of AS to produce anthranilate. In Arabidopsis thaliana (Mouse-ear cress), this protein is Anthranilate synthase alpha subunit 2, chloroplastic (ASA2).